Reading from the N-terminus, the 467-residue chain is ATP-dependent protease ATPase subunit HslU (467 aa).

ATP-binding positions include V22 and 64–69 (GVGKTE). A disordered region spans residues 149-192 (QTNNPLESLFGGAIPNFGQNNEDEEEPPTEEIKTKRSEIKRQLE). The span at 178 to 192 (EEIKTKRSEIKRQLE) shows a compositional bias: basic and acidic residues. Residues D280, E345, and R417 each coordinate ATP.

This sequence belongs to the ClpX chaperone family. HslU subfamily. In terms of assembly, a double ring-shaped homohexamer of HslV is capped on each side by a ring-shaped HslU homohexamer. The assembly of the HslU/HslV complex is dependent on binding of ATP.

The protein localises to the cytoplasm. Its function is as follows. ATPase subunit of a proteasome-like degradation complex; this subunit has chaperone activity. The binding of ATP and its subsequent hydrolysis by HslU are essential for unfolding of protein substrates subsequently hydrolyzed by HslV. HslU recognizes the N-terminal part of its protein substrates and unfolds these before they are guided to HslV for hydrolysis. The sequence is that of ATP-dependent protease ATPase subunit HslU from Staphylococcus aureus (strain MW2).